A 2967-amino-acid chain; its full sequence is MSSPLKFPFKQQQQQQQQQRSRIGGDDIMNKLENEKYIVKQLFEQLLGYDNNSSFSNSNNLRITNQINNLFNGNYDPTEQDRFIIKNFTKIHEIILLLKDEEISSFIKIKILDQLIQILSYSSNNTINLIQSTSPINNNNNRKSKTLYTNKSLVILDELIQMLPSIDNEQISLKTLQLIEILGTEHITVKQLRKLLKLFDRNYLLTNFKPNHYFLQNGLPNLMKSLDVMTFRKAPSSVFYMNGINSGLIVDPIGKISTSGYTISTWINIESFQHESEFIRSYEPRLFSFLNDGGSAGIEGYFENSKFVIRINEKVKAIVNLNNNNNNNNNNNNNNNNNNNNNNNNNNNNNNNNNNNNNNSSSNSDFPTNKWCHLLVTQSPKKWGLYPGNTTLNIYLDGKLVHTQQIKYPSTSKNLNICSIGTVPSGSVPSNNSGFTYISSPSSPFSLSSSSSGGNNQSECCLKCQMGSFSMLSTFYDNSDVQDLFRKGSNYILKKQKNVQFTFSPKSFYGGVCHGLGNRELDNSINAFSIGDLKIFSTFSIKDSIYLIGGPQIIFPLLQAIEDQFKFITPITLSPNLLSSSSSSSSSILSIDPNNNNNNNNNNNNNIQQPQQQQLQLNEEETINTNNNIKLTSSQSTDNIVVFNGSQEDINQLSKLINYPRISSILRFITHLLINDKYNQKELIGSNGLSLLGYLISNIFSNSDSNPSHPYNFKTLEREEFDLIFDALDQLTDFSLVDKNPLLKLNIYKEIIFNFNIWVHIKKEYQIQLFNLIIFKVSQNPQYFRENIKVRYLLDCIKYFYHINENTIISTNNNNNNNNIGESSGANNNNNNNNNNTNNVGNCRLNCHLSNQDLKEIISYIFDIIKIIIKPILNEKEVPEIQEIIKFIQDSECNSTVIKESLMILLSNLFLPVNNNNNSNNNNNNNNSNSNNNNINIGGDEKFQNYDTIKGFLNSFESSGDIKSLLGLLKHNNEQVQVLVIKIIGKYMGGSEGLSMASSGNVRRSLKLKNTLTDVLYFITDQLMEFEMTELMYRGLSEIVVDEITPSIADTPNSPLLELLGSETLLADSISSVNIMGGSNNNNNNNNNNSNNNKDKIDSNNKDKDSKEKRIINIAALETICRLAIRAPLALQQKILNEILLCIKHLPQMRAGILDSENWQHWLLSLWPQPRSNTSSPPWSPPISPLLTSTKSMSPSPPPPPPLSSSSYQQQQQNIISDHRSQTKEQLSIRAYQSGIKEILTGIMKVLLFDCINKKDGWKFIEETEAWIFSILPNGVPLERRIFYECLLNLERGLKSSNHDPTTGGILLKNYVNLVSIIEDFVFSHTMNILAHRNTQSQWEDFGVVAKLLDIFDISQSIQTIRIQANVVKPTASSSLNPFSSNHSNYQSPYGSMQFSPYIMTLANNSGTIDLPSIDVTSGSAKAKSSIHTIYRLCLCIFQEAESCFYGERESYHQSKHDHTNENADDEERQFSIRVWGLPMISEDMDHIISKNSIRIQTILASERDQKEQVKHVMWIVCSLITIIRRHKTNNEDKIIINTQSIIISLLKQLLKTYGDLIDNFINPPSNILSPIINSVVGGGNNNNNSGNNNSGNNINNNNNNNNNNTNLNNNENEKTSFSVHSISSLNEKTDLINHPEFLKYFNDKLLPKITLLDKLHEIKDHYENAHLQSAFTMTRRNKVLEAINSNYQKHQNVITYKINKLLTKSISTSQKYEFQEIQRKSDFQEYIQQYNQYIIDLWNTKFKQLTQQESSPWFQMEPNHNEKTIWRLYNISNSNRVNILMKKDYDGTDHPEASLSNQKILRQQQLRMEQQQQLRLEQQQQKLQQQQQQQQQQQQSQQSLQLPPSPSISNAGSSSSVVEQLKNNPILRKVTKHTTSTDSLGNDTLVGFEIEEKDDDGNNIILDDEHESEWCLVDEKIMKPQKTPQNQHQQQQAQQQHQQQQQQHQFKRSTSLSANQTLLNTSSTSSLSSSSSPSSSFSNIQTVTNSGGGGTNIITTTTTTTTTSTLNNDRVNSNFNLFEQLNLLNPKKSTLTSSSSSSPSSNNNNGNSNNNSNNNNNNNKNIKLEFSTQGEIIKPMSVIRIKLQIFTDRLILTSNLIQEDDCIPPKYLKDREYEIKKIIGVQCRRYLLSPTALEFFFIDRKSLLVNFPRGSICAQILKLIGNLYGSNDIIFKINTNNVSFFDGTIGANNSTNNSNSNQPMTPQQVVIKYLNPTARWKRREISNFEYLMTLNTIAGRTYNDLNQYPVFPWIIGDNSSNTLNINDQSIYRDLSKPIGALNPTRLELFMERWTQCPAEIPAFMYGTHYSSSGSVMFFLMRCEPFTSHFIKLQSGHFDHADRMFDSIIDCWRNCLNSSSDVKELTPEFFYLPEFLINRNRVEFGVKQNGKALDNVSLPPWAQQSPYHFIMLNRMALESEYVSMNLHHWIDLIFGYKQRGKEAVKANNVFYHLTYEGSVDIGAMNDPILREATRVQINNFGVTPSQLFPNQPHPQRDPLPQRYSNKLDIFKRLKPLQLISLPFSPLCIFVYCPTKSDYYSGGIGSSLISGVVGNSSSANSLLGDRVLLIGEANNDLQYYRYLESTSTISTQTSTNLVSQSVQPLPSNANQPITLSSGLRSVIGKPFCQIPSNSRVLLTSGKCDYTLHIVHGEGSKLVTGSINHKSPITCIVYDEYQCGRLGVGGVLIEQKVIVTGSDDSTAIVWEYEQSQSDHHSIKPIHILRGHNFGITCIAINKANDICLTASKDGKVNVHSLKKGTFFKSIQHPNKLPIHSIILENDSSTFFIYSNSILPIVQSDYNSSATTTTTTRDDESSSSSLSSSNTTISNNNVLYRYSINGDLIQSVQNDVQPIIVKMLITKSQNGIRYLLTAGGYQIVIREMLNLEIVHVFDIRDLSGFTNSNKIVDIYLWGGDESYQKPSTSVSGDSNSNNNNNNNGNNTINNNLTLMVPLESCQLLIYSFDEFGNLKSLD.

Disordered regions lie at residues 1 to 25 (MSSP…RIGG), 322 to 364 (NNNN…SSNS), 588 to 615 (ILSI…QQQL), 917 to 936 (NNSN…NNIN), 1077 to 1105 (GGSN…KDKD), 1173 to 1220 (NTSS…SDHR), 1583 to 1613 (NNNS…NNEN), 1831 to 1859 (QQQQ…SSVV), 1921 to 2009 (PQKT…TLNN), and 2029 to 2062 (KSTL…NNKN). Residues 229 to 491 (MTFRKAPSSV…QDLFRKGSNY (263 aa)) form the BEACH 1 domain. Residues 1079–1092 (SNNNNNNNNNNSNN) show a composition bias toward low complexity. Residues 1093–1105 (NKDKIDSNNKDKD) show a composition bias toward basic and acidic residues. 6 stretches are compositionally biased toward low complexity: residues 1185-1194 (PLLTSTKSMS), 1583-1611 (NNNS…LNNN), 1831-1857 (QQQQ…SSSS), 1926-1980 (QNQH…SFSN), 1993-2006 (NIIT…TTST), and 2034-2062 (SSSS…NNKN). In terms of domain architecture, BEACH-type PH spans 2060–2162 (NKNIKLEFST…ICAQILKLIG (103 aa)). BEACH domains lie at 2202–2492 (TPQQ…HPQR) and 2628–2785 (NSRV…IYSN). WD repeat units follow at residues 2658–2710 (NHKS…SDHH) and 2720–2761 (GHNF…KSIQ). 2 disordered regions span residues 2798 to 2820 (SATT…SSNT) and 2915 to 2934 (PSTS…NNGN). Low complexity-rich tracts occupy residues 2811-2820 (SSSSLSSSNT) and 2924-2934 (NSNNNNNNNGN).

This chain is BEACH domain-containing protein lvsD (lvsD), found in Dictyostelium discoideum (Social amoeba).